Consider the following 520-residue polypeptide: Biotinidase (520 aa).

The first 21 residues, methionine 1 to glycine 21, serve as a signal peptide directing secretion. Positions asparagine 49–proline 333 constitute a CN hydrolase domain. Glutamate 89 (proton acceptor) is an active-site residue. N-linked (GlcNAc...) asparagine glycans are attached at residues asparagine 96, asparagine 127, and asparagine 180. Lysine 189 (proton donor) is an active-site residue. Residue cysteine 222 is the Nucleophile of the active site. Asparagine 326, asparagine 379, and asparagine 466 each carry an N-linked (GlcNAc...) asparagine glycan.

The protein belongs to the carbon-nitrogen hydrolase superfamily. BTD/VNN family.

Its subcellular location is the secreted. The protein localises to the extracellular space. It carries out the reaction biocytin + H2O = biotin + L-lysine. The catalysed reaction is biotin amide + H2O = biotin + NH4(+). Catalytic release of biotin from biocytin, the product of biotin-dependent carboxylases degradation. The sequence is that of Biotinidase (Btd) from Mus musculus (Mouse).